The sequence spans 890 residues: Major vault protein (890 aa).

MVP repeat units lie at residues 2 to 56, 57 to 111, 112 to 164, 165 to 217, 218 to 272, 273 to 323, 324 to 379, 380 to 457, and 458 to 520; these read SMEE…VPPR, HYCM…DITP, LQVV…EIIQ, ATVI…DVVD, AVIL…GVVS, VTTL…IQNV, YVLS…ERQA, IPLD…KTRV, and VSYR…LLGP. Positions 425–455 are disordered; that stretch reads ELLNKGQDPLADRGEKETSKTPKLSTPRNKT. The segment covering 434–444 has biased composition (basic and acidic residues); sequence LADRGEKETSK. Residue Lys-444 forms a Glycyl lysine isopeptide (Lys-Gly) (interchain with G-Cter in SUMO2) linkage.

In terms of assembly, the vault ribonucleoprotein particle is a huge (400 A x 670 A) cage structure of 12.9 MDa. It consists of a dimer of half-vaults, with each half-vault comprising 39 identical major vault protein (MVP) chains, PARP4 and one or more vault RNAs (vRNAs). Interacts with TEP1. Interacts with PTEN and activated MAPK1. The phosphorylated protein interacts with the SH2 domains of PTPN11 and SRC. Interacts with APEX1. May interact with ZNF540. Post-translationally, phosphorylated on Tyr residues after EGF stimulation. In terms of processing, dephosphorylated by PTPN11.

The protein localises to the cytoplasm. Its subcellular location is the nucleus. Functionally, required for normal vault structure. Vaults are multi-subunit structures that may act as scaffolds for proteins involved in signal transduction. Vaults may also play a role in nucleo-cytoplasmic transport. Down-regulates IFNG-mediated STAT1 signaling and subsequent activation of JAK. Down-regulates SRC activity and signaling through MAP kinases. This is Major vault protein (MVP) from Bos taurus (Bovine).